We begin with the raw amino-acid sequence, 157 residues long: uncharacterized protein (157 aa).

This is an uncharacterized protein from Pseudoalteromonas espejiana (Bacteriophage PM2).